Here is a 465-residue protein sequence, read N- to C-terminus: Ribulose bisphosphate carboxylase large chain (465 aa).

Position 4 is an N6,N6,N6-trimethyllysine (Lys4). Substrate is bound by residues Asn113 and Thr163. Lys165 functions as the Proton acceptor in the catalytic mechanism. A substrate-binding site is contributed by Lys167. Mg(2+) is bound by residues Lys191, Asp193, and Glu194. Lys191 is modified (N6-carboxylysine). Catalysis depends on His284, which acts as the Proton acceptor. Substrate contacts are provided by Arg285, His317, and Ser369.

It belongs to the RuBisCO large chain family. Type I subfamily. Heterohexadecamer of 8 large chains and 8 small chains; disulfide-linked. The disulfide link is formed within the large subunit homodimers. The cofactor is Mg(2+). In terms of processing, the disulfide bond which can form in the large chain dimeric partners within the hexadecamer appears to be associated with oxidative stress and protein turnover.

The protein resides in the plastid. It is found in the chloroplast. It catalyses the reaction 2 (2R)-3-phosphoglycerate + 2 H(+) = D-ribulose 1,5-bisphosphate + CO2 + H2O. The enzyme catalyses D-ribulose 1,5-bisphosphate + O2 = 2-phosphoglycolate + (2R)-3-phosphoglycerate + 2 H(+). RuBisCO catalyzes two reactions: the carboxylation of D-ribulose 1,5-bisphosphate, the primary event in carbon dioxide fixation, as well as the oxidative fragmentation of the pentose substrate in the photorespiration process. Both reactions occur simultaneously and in competition at the same active site. This chain is Ribulose bisphosphate carboxylase large chain, found in Ulmus alata (Winged elm).